A 317-amino-acid chain; its full sequence is tRNA dimethylallyltransferase (317 aa).

14 to 21 (GPTAVGKT) contacts ATP. 16–21 (TAVGKT) provides a ligand contact to substrate. The tract at residues 39-42 (DSMQ) is interaction with substrate tRNA.

Belongs to the IPP transferase family. Monomer. The cofactor is Mg(2+).

It carries out the reaction adenosine(37) in tRNA + dimethylallyl diphosphate = N(6)-dimethylallyladenosine(37) in tRNA + diphosphate. Functionally, catalyzes the transfer of a dimethylallyl group onto the adenine at position 37 in tRNAs that read codons beginning with uridine, leading to the formation of N6-(dimethylallyl)adenosine (i(6)A). The sequence is that of tRNA dimethylallyltransferase from Bacillus cereus (strain Q1).